Here is a 386-residue protein sequence, read N- to C-terminus: Transcription factor GTE1 (386 aa).

Disordered stretches follow at residues 66 to 106 and 340 to 386; these read GAAQ…KHVS and ANKS…AKKA. The segment covering 68-78 has biased composition (polar residues); it reads AQTNTSKSNSG. A Bromo domain is found at 105-211; that stretch reads VSSPDLMRQF…EKFEEKWLLI (107 aa). An NET domain is found at 263 to 344; the sequence is RESVVQRCRK…EALKAANKSS (82 aa). The segment covering 345 to 358 has biased composition (low complexity); it reads GGTNAQNNNNTGTG.

Barely detectable in stems, leaves, siliques, and dry seeds, but was present at considerable levels in roots, flowers and imbibited seeds.

It is found in the nucleus. Functionally, transcription activator that plays a role in the promotion of seed germination by both negatively and positively regulating the abscisic acid (ABA) and phytochrome A (phyA) transduction pathways, respectively. The protein is Transcription factor GTE1 (GTE1) of Arabidopsis thaliana (Mouse-ear cress).